Consider the following 369-residue polypeptide: Chorismate synthase (369 aa).

2 residues coordinate NADP(+): Arg-48 and Arg-54. FMN contacts are provided by residues 125–127 (RSS), 238–239 (NA), Gly-278, 293–297 (KPTSS), and Arg-319.

This sequence belongs to the chorismate synthase family. In terms of assembly, homotetramer. FMNH2 is required as a cofactor.

It carries out the reaction 5-O-(1-carboxyvinyl)-3-phosphoshikimate = chorismate + phosphate. It functions in the pathway metabolic intermediate biosynthesis; chorismate biosynthesis; chorismate from D-erythrose 4-phosphate and phosphoenolpyruvate: step 7/7. In terms of biological role, catalyzes the anti-1,4-elimination of the C-3 phosphate and the C-6 proR hydrogen from 5-enolpyruvylshikimate-3-phosphate (EPSP) to yield chorismate, which is the branch point compound that serves as the starting substrate for the three terminal pathways of aromatic amino acid biosynthesis. This reaction introduces a second double bond into the aromatic ring system. The sequence is that of Chorismate synthase from Nitrosococcus oceani (strain ATCC 19707 / BCRC 17464 / JCM 30415 / NCIMB 11848 / C-107).